A 142-amino-acid polypeptide reads, in one-letter code: gSG7 salivary protein (142 aa).

The signal sequence occupies residues 1–25; that stretch reads METKLVLALIACGVICLLQTTPTEA. Cystine bridges form between Cys-83-Cys-138 and Cys-106-Cys-116.

In terms of assembly, interacts with host coagulation factor XII (F12) (inactive and activated). Interacts with host high molecular weight kininogen (KNG1) (inactive and activated).

It is found in the secreted. Zn(2+) modulates binding to host coagulation factor XII (F12) and high molecular weight kininogen (KNG1). Salivary protein with anticoagulant activity. Inhibits activation of host kallikrein-kinin system by preventing the reciprocal activation of coagulation factor XII (F12) and prekallikrein (KLKB1), and subsequent release of bradykinin. Inhibits host factor XII and high molecular weight kininogen (KNG1) binding to negatively charged surfaces. Weakly inhibits the alternative pathway of complement system activation in the host. The chain is gSG7 salivary protein from Anopheles stephensi (Indo-Pakistan malaria mosquito).